The sequence spans 418 residues: IQ domain-containing protein C (418 aa).

An IQ domain is found at 6–35 (FLRKVSTLQAGFRGFLVRRQFQSLRAEYEA). Disordered stretches follow at residues 101–142 (QKKT…SVSK), 230–264 (HHAE…KGRE), 280–299 (SQAG…QPFK), 327–355 (AETQ…AGPC), and 376–418 (GSLD…LQWR). 2 stretches are compositionally biased toward polar residues: residues 129–142 (KASQ…SVSK) and 249–259 (SVTSAGKTTAG). Residues 141–176 (SKMENADLGLSQSQQELQEQRNHLAMELLWLQQAIN) adopt a coiled-coil conformation. Over residues 390-404 (PPSAGSSGHGNTSEL) the composition is skewed to polar residues.

This Mus musculus (Mouse) protein is IQ domain-containing protein C (Iqcc).